The primary structure comprises 157 residues: S-ribosylhomocysteine lyase (157 aa).

Residues His54, His58, and Cys124 each coordinate Fe cation.

This sequence belongs to the LuxS family. In terms of assembly, homodimer. It depends on Fe cation as a cofactor.

The enzyme catalyses S-(5-deoxy-D-ribos-5-yl)-L-homocysteine = (S)-4,5-dihydroxypentane-2,3-dione + L-homocysteine. Its function is as follows. Involved in the synthesis of autoinducer 2 (AI-2) which is secreted by bacteria and is used to communicate both the cell density and the metabolic potential of the environment. The regulation of gene expression in response to changes in cell density is called quorum sensing. Catalyzes the transformation of S-ribosylhomocysteine (RHC) to homocysteine (HC) and 4,5-dihydroxy-2,3-pentadione (DPD). In Oenococcus oeni (strain ATCC BAA-331 / PSU-1), this protein is S-ribosylhomocysteine lyase.